The sequence spans 525 residues: Ribosomal protein uS12 methylthiotransferase RimO (525 aa).

A compositionally biased stretch (polar residues) spans 1 to 20; sequence MPKISTESVNTTIAPSQPAS. The tract at residues 1–44 is disordered; that stretch reads MPKISTESVNTTIAPSQPASTAPKDTATLFNPAKPTATPAQSSI. Residues 82–192 form the MTTase N-terminal domain; the sequence is PKIGFVSLGC…VIRAVALHVP (111 aa). C91, C127, C156, C230, C234, and C237 together coordinate [4Fe-4S] cluster. Positions 216–453 constitute a Radical SAM core domain; sequence LTPSHYAYLK…MTLQQDISAQ (238 aa). A TRAM domain is found at 456–525; that stretch reads QEKIGKTLMV…EYDLFASYQA (70 aa).

It belongs to the methylthiotransferase family. RimO subfamily. [4Fe-4S] cluster is required as a cofactor.

Its subcellular location is the cytoplasm. It carries out the reaction L-aspartate(89)-[ribosomal protein uS12]-hydrogen + (sulfur carrier)-SH + AH2 + 2 S-adenosyl-L-methionine = 3-methylsulfanyl-L-aspartate(89)-[ribosomal protein uS12]-hydrogen + (sulfur carrier)-H + 5'-deoxyadenosine + L-methionine + A + S-adenosyl-L-homocysteine + 2 H(+). Catalyzes the methylthiolation of an aspartic acid residue of ribosomal protein uS12. The polypeptide is Ribosomal protein uS12 methylthiotransferase RimO (Psychrobacter arcticus (strain DSM 17307 / VKM B-2377 / 273-4)).